The following is a 517-amino-acid chain: ATP synthase subunit alpha (517 aa).

175–182 (GDRQTGKT) is an ATP binding site.

It belongs to the ATPase alpha/beta chains family. As to quaternary structure, F-type ATPases have 2 components, CF(1) - the catalytic core - and CF(0) - the membrane proton channel. CF(1) has five subunits: alpha(3), beta(3), gamma(1), delta(1), epsilon(1). CF(0) has three main subunits: a(1), b(2) and c(9-12). The alpha and beta chains form an alternating ring which encloses part of the gamma chain. CF(1) is attached to CF(0) by a central stalk formed by the gamma and epsilon chains, while a peripheral stalk is formed by the delta and b chains.

The protein localises to the cell membrane. The catalysed reaction is ATP + H2O + 4 H(+)(in) = ADP + phosphate + 5 H(+)(out). Produces ATP from ADP in the presence of a proton gradient across the membrane. The alpha chain is a regulatory subunit. The polypeptide is ATP synthase subunit alpha (Herpetosiphon aurantiacus (strain ATCC 23779 / DSM 785 / 114-95)).